The following is a 254-amino-acid chain: Ribonuclease HII (254 aa).

Positions 70–254 (QAIAGIDEVG…TFEPIKSMYE (185 aa)) constitute an RNase H type-2 domain. D76, E77, and D168 together coordinate a divalent metal cation.

Belongs to the RNase HII family. Requires Mn(2+) as cofactor. Mg(2+) is required as a cofactor.

Its subcellular location is the cytoplasm. It carries out the reaction Endonucleolytic cleavage to 5'-phosphomonoester.. In terms of biological role, endonuclease that specifically degrades the RNA of RNA-DNA hybrids. This is Ribonuclease HII from Streptococcus sanguinis (strain SK36).